The following is a 257-amino-acid chain: Tryptophan synthase alpha chain (257 aa).

Residues Glu-47 and Asp-58 each act as proton acceptor in the active site.

It belongs to the TrpA family. Tetramer of two alpha and two beta chains.

The catalysed reaction is (1S,2R)-1-C-(indol-3-yl)glycerol 3-phosphate + L-serine = D-glyceraldehyde 3-phosphate + L-tryptophan + H2O. It functions in the pathway amino-acid biosynthesis; L-tryptophan biosynthesis; L-tryptophan from chorismate: step 5/5. The alpha subunit is responsible for the aldol cleavage of indoleglycerol phosphate to indole and glyceraldehyde 3-phosphate. The polypeptide is Tryptophan synthase alpha chain (Listeria welshimeri serovar 6b (strain ATCC 35897 / DSM 20650 / CCUG 15529 / CIP 8149 / NCTC 11857 / SLCC 5334 / V8)).